A 194-amino-acid chain; its full sequence is MVASVVRLKVTLDHVEPIVMRRVVVPFTIRLSRLHEVLQAAMGWTNSHLYEFRMRDVGFGLPDEEWGDGPIDARRVSLLSAVQDTGAKSFKYLYDFGDGWEHSIKIERTFPAVGTEGPMLLEATGHCPPEDVGGPWGYQEFCEALADPAHERHAETLEWCGSSDYDSAAANFSQLNKAVDDLAAKWARKARRKT.

The protein to A.rhizogenes plasmid pRia4B ORF-3 in virA region.

This is an uncharacterized protein from Sinorhizobium fredii (strain NBRC 101917 / NGR234).